Here is a 457-residue protein sequence, read N- to C-terminus: Bifunctional protein GlmU (457 aa).

A pyrophosphorylase region spans residues 1–230 (MPLSLPLHIV…AREVEGVNDL (230 aa)). Residues 12–15 (LAAG), Lys26, Gln78, 83–84 (GT), 105–107 (YGD), Gly140, Glu155, Asn170, and Asn228 contribute to the UDP-N-acetyl-alpha-D-glucosamine site. Residue Asp107 coordinates Mg(2+). Residue Asn228 participates in Mg(2+) binding. The linker stretch occupies residues 231–251 (WQLTQLERAWQIRAARALCLQ). The tract at residues 252 to 457 (GARVADPARL…DSWQRPKKKT (206 aa)) is N-acetyltransferase. Residues Arg334 and Lys352 each coordinate UDP-N-acetyl-alpha-D-glucosamine. The Proton acceptor role is filled by His364. Residues Tyr367 and Asn378 each coordinate UDP-N-acetyl-alpha-D-glucosamine. Acetyl-CoA is bound by residues Ala381, 387 to 388 (NY), Ser406, Ala424, and Arg441.

This sequence in the N-terminal section; belongs to the N-acetylglucosamine-1-phosphate uridyltransferase family. In the C-terminal section; belongs to the transferase hexapeptide repeat family. As to quaternary structure, homotrimer. The cofactor is Mg(2+).

It is found in the cytoplasm. It catalyses the reaction alpha-D-glucosamine 1-phosphate + acetyl-CoA = N-acetyl-alpha-D-glucosamine 1-phosphate + CoA + H(+). The catalysed reaction is N-acetyl-alpha-D-glucosamine 1-phosphate + UTP + H(+) = UDP-N-acetyl-alpha-D-glucosamine + diphosphate. The protein operates within nucleotide-sugar biosynthesis; UDP-N-acetyl-alpha-D-glucosamine biosynthesis; N-acetyl-alpha-D-glucosamine 1-phosphate from alpha-D-glucosamine 6-phosphate (route II): step 2/2. It participates in nucleotide-sugar biosynthesis; UDP-N-acetyl-alpha-D-glucosamine biosynthesis; UDP-N-acetyl-alpha-D-glucosamine from N-acetyl-alpha-D-glucosamine 1-phosphate: step 1/1. Its pathway is bacterial outer membrane biogenesis; LPS lipid A biosynthesis. Functionally, catalyzes the last two sequential reactions in the de novo biosynthetic pathway for UDP-N-acetylglucosamine (UDP-GlcNAc). The C-terminal domain catalyzes the transfer of acetyl group from acetyl coenzyme A to glucosamine-1-phosphate (GlcN-1-P) to produce N-acetylglucosamine-1-phosphate (GlcNAc-1-P), which is converted into UDP-GlcNAc by the transfer of uridine 5-monophosphate (from uridine 5-triphosphate), a reaction catalyzed by the N-terminal domain. The sequence is that of Bifunctional protein GlmU from Xylella fastidiosa (strain 9a5c).